A 43-amino-acid polypeptide reads, in one-letter code: Putative inhibitor of glucose uptake transporter SgrT (43 aa).

Acts to promote recovery from glucose-phosphate stress due to intracellular accumulation of glucose-6-phosphate caused by disruption of glycolytic flux or in the presence of (toxic) non-metabolizable glucose phosphate analogs. It may do so by inhibiting the transporter activity for glucose uptake (PtsG) as cells that overexpress this protein do not seem to import glucose although they have nearly wild-type levels of PtsG. This is Putative inhibitor of glucose uptake transporter SgrT (sgrT) from Escherichia coli (strain K12).